The sequence spans 236 residues: Peptidase E (236 aa).

Residues Ser-122, Asp-137, and His-159 each act as charge relay system in the active site.

This sequence belongs to the peptidase S51 family.

Its subcellular location is the cytoplasm. The enzyme catalyses Dipeptidase E catalyzes the hydrolysis of dipeptides Asp-|-Xaa. It does not act on peptides with N-terminal Glu, Asn or Gln, nor does it cleave isoaspartyl peptides.. Hydrolyzes dipeptides containing N-terminal aspartate residues. May play a role in allowing the cell to use peptide aspartate to spare carbon otherwise required for the synthesis of the aspartate family of amino acids. This is Peptidase E from Shewanella sp. (strain W3-18-1).